We begin with the raw amino-acid sequence, 276 residues long: 2,3,4,5-tetrahydropyridine-2,6-dicarboxylate N-succinyltransferase (276 aa).

2 residues coordinate substrate: arginine 107 and aspartate 144.

This sequence belongs to the transferase hexapeptide repeat family. Homotrimer.

The protein resides in the cytoplasm. The catalysed reaction is (S)-2,3,4,5-tetrahydrodipicolinate + succinyl-CoA + H2O = (S)-2-succinylamino-6-oxoheptanedioate + CoA. The protein operates within amino-acid biosynthesis; L-lysine biosynthesis via DAP pathway; LL-2,6-diaminopimelate from (S)-tetrahydrodipicolinate (succinylase route): step 1/3. In Gluconobacter oxydans (strain 621H) (Gluconobacter suboxydans), this protein is 2,3,4,5-tetrahydropyridine-2,6-dicarboxylate N-succinyltransferase.